We begin with the raw amino-acid sequence, 380 residues long: Cyclohexane-1-carbonyl-CoA dehydrogenase (380 aa).

The protein belongs to the acyl-CoA dehydrogenase family. In terms of assembly, homotetramer. It depends on FAD as a cofactor.

It carries out the reaction cyclohexane-1-carbonyl-CoA + oxidized [electron-transfer flavoprotein] + H(+) = cyclohex-1-ene-1-carbonyl-CoA + reduced [electron-transfer flavoprotein]. Its function is as follows. Acyl-CoA dehydrogenase involved in the anaerobic degradation of cyclohexane carboxylic acid (CHC). Catalyzes the 1,2-dehydrogenation of cyclohexane-1-carbonyl-CoA (CHCoA) to cyclohex-1-ene-1-carbonyl-CoA (CHeneCoA). An alternative substrate, cyclohex-3-ene-1-carboxyl-CoA can be converted to the corresponding cyclohexadiene-1-carboxyl-CoA isomers (30% rate compared to CHC). The polypeptide is Cyclohexane-1-carbonyl-CoA dehydrogenase (Geobacter metallireducens (strain ATCC 53774 / DSM 7210 / GS-15)).